The chain runs to 1255 residues: Period circadian protein homolog 2 (1255 aa).

Residues 1–79 are disordered; it reads MNGYAEFPPS…EPPDARQSPD (79 aa). A compositionally biased stretch (polar residues) spans 35–56; it reads SSGSSGHETNENCSTGRDSQGS. Positions 111 to 120 match the Nuclear export signal 1 motif; that stretch reads LIKTLKELKV. The region spanning 181 to 248 is the PAS 1 domain; it reads VTSEHIVKNA…FHSFTSPYKL (68 aa). The LXXLL motif lies at 308–312; that stretch reads LCCLL. In terms of domain architecture, PAS 2 spans 321–387; that stretch reads YEAPRIPPEK…MLAIHKKILQ (67 aa). Residues 395–438 form the PAC domain; the sequence is YSPIRFRARNGEYITLDTSWSSFINPWSRKISFIIGRHKVRVGP. The Nuclear export signal 2 signature appears at 462–471; it reads LTEQIHRLLL. 2 disordered regions span residues 473–557 and 617–646; these read PVPH…AVPA and RSSD…SRTG. The important for protein stability stretch occupies residues 480–484; that stretch reads SGYGS. Residues 504–516 show a composition bias toward basic and acidic residues; the sequence is NGHEDSRRRRAEI. The tract at residues 512-717 is CSNK1E binding domain; it reads RRAEICKNGN…ALACGLSQEK (206 aa). A phosphoserine mark is found at Ser-527, Ser-530, Ser-533, and Ser-540. A compositionally biased stretch (basic and acidic residues) spans 529–541; the sequence is YSHESGEQKKKSV. Phosphoserine occurs at positions 662, 696, 700, 714, 766, and 771. Disordered regions lie at residues 764–838 and 931–985; these read ERSK…DTSQ and FPSH…QSRS. Positions 789 to 805 match the Nuclear localization signal motif; sequence KKTGKNRKLKSKRVKPR. Residues 790–803 are compositionally biased toward basic residues; the sequence is KTGKNRKLKSKRVK. Composition is skewed to polar residues over residues 829–838 and 936–956; these read TAWSPSDTSQ and TLTS…TSIP. The tract at residues 888–1071 is interaction with PPARG; sequence QFAVQPPPFP…NEDLCSASGS (184 aa). Ser-945 is subject to Phosphoserine. The span at 959-972 shows a compositional bias: low complexity; the sequence is PCACPATRATPPSA. A Phosphoserine modification is found at Ser-977. Residues 989 to 996 carry the Nuclear export signal 3 motif; sequence LQLNLLQL. Residues 1018 to 1050 are disordered; it reads VGADCKPGTSRDQQPKAPLTRDEPSDTQNSDAL. The LXXLL signature appears at 1057–1061; it reads LNLLL. A disordered region spans residues 1077–1106; that stretch reads LGSGSLGCDASPSGAGSSDTSHTSKYFGSI. Residues 1090–1106 are compositionally biased toward polar residues; the sequence is GAGSSDTSHTSKYFGSI. Phosphoserine is present on Ser-1124. The CRY binding domain stretch occupies residues 1155-1255; sequence SRNLEAVLKE…PLNHRIEEQT (101 aa). The tract at residues 1231 to 1255 is disordered; that stretch reads GLSEVSDTKEDENGSPLNHRIEEQT.

In terms of assembly, homodimer. Component of the circadian core oscillator, which includes the CRY proteins, CLOCK or NPAS2, BMAL1 or BMAL2, CSNK1D and/or CSNK1E, TIMELESS, and the PER proteins. Interacts with CLOCK-BMAL1 (off DNA). Interacts with BMAL2. Interacts directly with PER1 and PER3, and through a C-terminal domain, with CRY1 and CRY2. Interacts (via PAS 2 domain) with TIMELESS. Interacts with NFIL3. Different large complexes have been identified with different repressive functions. The core of PER complexes is composed of at least PER1, PER2, PER3, CRY1, CRY2, CSNK1D and/or CSNK1E. The large PER complex involved in the repression of transcriptional termination is composed of at least PER2, CDK9, DDX5, DHX9, NCBP1 and POLR2A (active). The large PER complex involved in the histone deacetylation is composed of at least HDAC1, PER2, SFPQ and SIN3A. The large PER complex involved in the histone methylation is composed of at least PER2, CBX3, TRIM28, SUV39H1 and/or SUV39H2; CBX3 mediates the formation of the complex. Interacts with SETX; the interaction inhibits termination of circadian target genes. Interacts with the nuclear receptors HNF4A, NR1D1, NR4A2, RORA, PPARA, PPARG and THRA; the interaction with at least PPARG is ligand dependent. Interacts with PML. Interacts (phosphorylated) with BTRC and FBXW11; the interactions trigger proteasomal degradation. Interacts with NONO and SFPQ. Interacts with CAVIN3. Interacts with MAGEL2. Interacts with MAP1LC3B. Interacts with HNF4A. Post-translationally, acetylated. Deacetylated by SIRT1, resulting in decreased protein stability. Deacetylated by SIRT6, preventing its degradation by the proteasome, resulting in increased protein stability. In terms of processing, phosphorylated by CSNK1E and CSNK1D. Phosphorylation results in PER2 protein degradation. May be dephosphorylated by PP1. Ubiquitinated, leading to its proteasomal degradation. Ubiquitination may be inhibited by CRY1. As to expression, widely expressed. Found in heart, brain, placenta, lung, liver, skeleatal muscle, kidney and pancreas. High levels in skeletal muscle and pancreas. Low levels in lung. Isoform 2 is expressed in keratinocytes (at protein level).

It localises to the nucleus. The protein resides in the cytoplasm. Its subcellular location is the perinuclear region. It is found in the nucleolus. Its function is as follows. Transcriptional repressor which forms a core component of the circadian clock. The circadian clock, an internal time-keeping system, regulates various physiological processes through the generation of approximately 24 hour circadian rhythms in gene expression, which are translated into rhythms in metabolism and behavior. It is derived from the Latin roots 'circa' (about) and 'diem' (day) and acts as an important regulator of a wide array of physiological functions including metabolism, sleep, body temperature, blood pressure, endocrine, immune, cardiovascular, and renal function. Consists of two major components: the central clock, residing in the suprachiasmatic nucleus (SCN) of the brain, and the peripheral clocks that are present in nearly every tissue and organ system. Both the central and peripheral clocks can be reset by environmental cues, also known as Zeitgebers (German for 'timegivers'). The predominant Zeitgeber for the central clock is light, which is sensed by retina and signals directly to the SCN. The central clock entrains the peripheral clocks through neuronal and hormonal signals, body temperature and feeding-related cues, aligning all clocks with the external light/dark cycle. Circadian rhythms allow an organism to achieve temporal homeostasis with its environment at the molecular level by regulating gene expression to create a peak of protein expression once every 24 hours to control when a particular physiological process is most active with respect to the solar day. Transcription and translation of core clock components (CLOCK, NPAS2, BMAL1, BMAL2, PER1, PER2, PER3, CRY1 and CRY2) plays a critical role in rhythm generation, whereas delays imposed by post-translational modifications (PTMs) are important for determining the period (tau) of the rhythms (tau refers to the period of a rhythm and is the length, in time, of one complete cycle). A diurnal rhythm is synchronized with the day/night cycle, while the ultradian and infradian rhythms have a period shorter and longer than 24 hours, respectively. Disruptions in the circadian rhythms contribute to the pathology of cardiovascular diseases, cancer, metabolic syndrome and aging. A transcription/translation feedback loop (TTFL) forms the core of the molecular circadian clock mechanism. Transcription factors, CLOCK or NPAS2 and BMAL1 or BMAL2, form the positive limb of the feedback loop, act in the form of a heterodimer and activate the transcription of core clock genes and clock-controlled genes (involved in key metabolic processes), harboring E-box elements (5'-CACGTG-3') within their promoters. The core clock genes: PER1/2/3 and CRY1/2 which are transcriptional repressors form the negative limb of the feedback loop and interact with the CLOCK|NPAS2-BMAL1|BMAL2 heterodimer inhibiting its activity and thereby negatively regulating their own expression. This heterodimer also activates nuclear receptors NR1D1/2 and RORA/B/G, which form a second feedback loop and which activate and repress BMAL1 transcription, respectively. PER1 and PER2 proteins transport CRY1 and CRY2 into the nucleus with appropriate circadian timing, but also contribute directly to repression of clock-controlled target genes through interaction with several classes of RNA-binding proteins, helicases and others transcriptional repressors. PER appears to regulate circadian control of transcription by at least three different modes. First, interacts directly with the CLOCK-BMAL1 at the tail end of the nascent transcript peak to recruit complexes containing the SIN3-HDAC that remodel chromatin to repress transcription. Second, brings H3K9 methyltransferases such as SUV39H1 and SUV39H2 to the E-box elements of the circadian target genes, like PER2 itself or PER1. The recruitment of each repressive modifier to the DNA seems to be very precisely temporally orchestrated by the large PER complex, the deacetylases acting before than the methyltransferases. Additionally, large PER complexes are also recruited to the target genes 3' termination site through interactions with RNA-binding proteins and helicases that may play a role in transcription termination to regulate transcription independently of CLOCK-BMAL1 interactions. Recruitment of large PER complexes to the elongating polymerase at PER and CRY termination sites inhibited SETX action, impeding RNA polymerase II release and thereby repressing transcriptional reinitiation. May propagate clock information to metabolic pathways via the interaction with nuclear receptors. Coactivator of PPARA and corepressor of NR1D1, binds rhythmically at the promoter of nuclear receptors target genes like BMAL1 or G6PC1. Directly and specifically represses PPARG proadipogenic activity by blocking PPARG recruitment to target promoters and thereby inhibiting transcriptional activation. Required for fatty acid and lipid metabolism, is involved as well in the regulation of circulating insulin levels. Plays an important role in the maintenance of cardiovascular functions through the regulation of NO and vasodilatatory prostaglandins production in aortas. Controls circadian glutamate uptake in synaptic vesicles through the regulation of VGLUT1 expression. May also be involved in the regulation of inflammatory processes. Represses the CLOCK-BMAL1 induced transcription of BHLHE40/DEC1 and ATF4. Negatively regulates the formation of the TIMELESS-CRY1 complex by competing with TIMELESS for binding to CRY1. The chain is Period circadian protein homolog 2 (PER2) from Homo sapiens (Human).